Here is a 176-residue protein sequence, read N- to C-terminus: Mitochondrial inner membrane protein Mpv17 (176 aa).

Transmembrane regions (helical) follow at residues 18 to 38 (VQVL…QQLV), 53 to 73 (TMVS…YKVL), 94 to 114 (GGFA…LNGM), and 131 to 151 (LITN…LVPL).

It belongs to the peroxisomal membrane protein PXMP2/4 family. As to expression, high levels in heart, kidney, and brain, intermediate levels in testis, and low levels in liver and spleen.

The protein localises to the mitochondrion inner membrane. Non-selective channel that modulates the membrane potential under normal conditions and oxidative stress, and is involved in mitochondrial homeostasis. Involved in mitochondrial deoxynucleoside triphosphates (dNTP) pool homeostasis and mitochondrial DNA (mtDNA) maintenance. May be involved in the regulation of reactive oxygen species metabolism and the control of oxidative phosphorylation. The protein is Mitochondrial inner membrane protein Mpv17 of Mus musculus (Mouse).